The chain runs to 333 residues: Procathepsin L (333 aa).

The first 17 residues, 1–17 (MNPTFILAALCLGIASA), serve as a signal peptide directing secretion. The propeptide at 18–113 (TLTFNHSLEA…KVFQEPLFYE (96 aa)) is activation peptide. E122 provides a ligand contact to Zn(2+). 2 disulfide bridges follow: C135/C178 and C169/C211. The active site involves C138. Residues E163, D184, E199, E205, E209, D227, D250, H253, D273, and D275 each contribute to the Zn(2+) site. C269 and C322 are disulfide-bonded. The active site involves H276. Residues 289–291 (ESD) constitute a propeptide that is removed on maturation. The active site involves N300.

This sequence belongs to the peptidase C1 family. Dimer of a heavy and a light chain linked by disulfide bonds. Interacts with Long isoform of CD74/Ii chain; the interaction stabilizes the conformation of mature CTSL. Post-translationally, during export along the endocytic pathway, pro-CTSL undergoes several proteolytic cleavages to generate the CTSL single-chain and two-chain mature forms, composed of a heavy chain linked to a light chain by disulfide bonds. Autocleavage; produces the single-chain CTSL after cleavage of the propeptide. The cleavage can be intermolecular.

It localises to the lysosome. The protein resides in the apical cell membrane. It is found in the cytoplasmic vesicle. Its subcellular location is the secretory vesicle. The protein localises to the chromaffin granule. It localises to the secreted. The protein resides in the extracellular space. The enzyme catalyses Specificity close to that of papain. As compared to cathepsin B, cathepsin L exhibits higher activity toward protein substrates, but has little activity on Z-Arg-Arg-NHMec, and no peptidyl-dipeptidase activity.. With respect to regulation, inhibited by the propeptide produced by autocleavage. Long isoform of CD74/Ii chain stabilizes the conformation of mature CTSL by binding to its active site and serving as a chaperone to help maintain a pool of mature enzyme in endocytic compartments and extracellular space of APCs. IFNG enhances the conversion into the CTSL mature and active form. Inhibited by CST6. Inhibited by the glycopeptide antibiotic teicoplanin. Inhibited by amantadine. Functionally, thiol protease important for the overall degradation of proteins in lysosomes. Plays a critical for normal cellular functions such as general protein turnover, antigen processing and bone remodeling. Involved in the solubilization of cross-linked TG/thyroglobulin and in the subsequent release of thyroid hormone thyroxine (T4) by limited proteolysis of TG/thyroglobulin in the thyroid follicle lumen. In neuroendocrine chromaffin cells secretory vesicles, catalyzes the prohormone proenkephalin processing to the active enkephalin peptide neurotransmitter. In thymus, regulates CD4(+) T cell positive selection by generating the major histocompatibility complex class II (MHCII) bound peptide ligands presented by cortical thymic epithelial cells. Also mediates invariant chain processing in cortical thymic epithelial cells. Major elastin-degrading enzyme at neutral pH. Accumulates as a mature and active enzyme in the extracellular space of antigen presenting cells (APCs) to regulate degradation of the extracellular matrix in the course of inflammation. Secreted form generates endostatin from COL18A1. Critical for cardiac morphology and function. Plays an important role in hair follicle morphogenesis and cycling, as well as epidermal differentiation. Required for maximal stimulation of steroidogenesis by TIMP1. This is Procathepsin L (CTSL) from Chlorocebus aethiops (Green monkey).